A 71-amino-acid chain; its full sequence is Small ribosomal subunit protein bS21 (71 aa).

It belongs to the bacterial ribosomal protein bS21 family.

This is Small ribosomal subunit protein bS21 from Alcanivorax borkumensis (strain ATCC 700651 / DSM 11573 / NCIMB 13689 / SK2).